A 334-amino-acid polypeptide reads, in one-letter code: Protein-methionine-sulfoxide reductase catalytic subunit MsrP (334 aa).

A signal peptide (tat-type signal) is located at residues 1-44; it reads MKKNQFLKESDVTAESVFFMKRRQVLKALGISAAALSLPHAAHA. Residues Asn-88, 91–92, Cys-146, Thr-181, Asn-233, Arg-238, and 249–251 contribute to the Mo-molybdopterin site; these read YE and GIK.

It belongs to the MsrP family. In terms of assembly, heterodimer of a catalytic subunit (MsrP) and a heme-binding subunit (MsrQ). The cofactor is Mo-molybdopterin. In terms of processing, predicted to be exported by the Tat system. The position of the signal peptide cleavage has not been experimentally proven.

It localises to the periplasm. The enzyme catalyses L-methionyl-[protein] + a quinone + H2O = L-methionyl-(S)-S-oxide-[protein] + a quinol. It catalyses the reaction L-methionyl-[protein] + a quinone + H2O = L-methionyl-(R)-S-oxide-[protein] + a quinol. In terms of biological role, part of the MsrPQ system that repairs oxidized periplasmic proteins containing methionine sulfoxide residues (Met-O), using respiratory chain electrons. Thus protects these proteins from oxidative-stress damage caused by reactive species of oxygen and chlorine generated by the host defense mechanisms. MsrPQ is essential for the maintenance of envelope integrity under bleach stress, rescuing a wide series of structurally unrelated periplasmic proteins from methionine oxidation, including the primary periplasmic chaperone SurA and the lipoprotein Pal. The catalytic subunit MsrP is non-stereospecific, being able to reduce both (R-) and (S-) diastereoisomers of methionine sulfoxide. This chain is Protein-methionine-sulfoxide reductase catalytic subunit MsrP, found in Escherichia coli O17:K52:H18 (strain UMN026 / ExPEC).